The following is a 339-amino-acid chain: DNA-directed RNA polymerase subunit alpha (339 aa).

Residues 1 to 235 form an alpha N-terminal domain (alpha-NTD) region; it reads MTIQKNWQEL…DQLNVFVNFE (235 aa). The interval 251–339 is alpha C-terminal domain (alpha-CTD); it reads FNPAFLKKVD…ELAKRFEDHY (89 aa).

This sequence belongs to the RNA polymerase alpha chain family. Homodimer. The RNAP catalytic core consists of 2 alpha, 1 beta, 1 beta' and 1 omega subunit. When a sigma factor is associated with the core the holoenzyme is formed, which can initiate transcription.

The enzyme catalyses RNA(n) + a ribonucleoside 5'-triphosphate = RNA(n+1) + diphosphate. In terms of biological role, DNA-dependent RNA polymerase catalyzes the transcription of DNA into RNA using the four ribonucleoside triphosphates as substrates. The protein is DNA-directed RNA polymerase subunit alpha of Rhodopseudomonas palustris (strain BisB18).